Reading from the N-terminus, the 24-residue chain is Gaegurin-6 (24 aa).

Residues C18 and C24 are joined by a disulfide bond.

It belongs to the frog skin active peptide (FSAP) family. Brevinin subfamily. As to quaternary structure, monomer. As to expression, expressed by the skin glands.

It localises to the secreted. Has a non-hemolytic activity. Has a broad spectrum of activity against both Gram-positive and Gram-negative bacteria, fungi and protozoa. The chain is Gaegurin-6 (GGN6) from Glandirana rugosa (Japanese wrinkled frog).